Consider the following 256-residue polypeptide: Distal membrane-arm assembly complex protein 2 (256 aa).

Ser252 is modified (phosphoserine).

Belongs to the ATP synthase subunit s family. In terms of assembly, interacts with incompletely assembled mitochondrial NADH:ubiquinone oxidoreductase complex (complex I).

The protein localises to the mitochondrion. Required for the assembly of the mitochondrial NADH:ubiquinone oxidoreductase complex (complex I). Involved in the assembly of the distal region of complex I. The chain is Distal membrane-arm assembly complex protein 2 from Macaca fascicularis (Crab-eating macaque).